The following is a 391-amino-acid chain: Lipoyl synthase, mitochondrial (391 aa).

A mitochondrion-targeting transit peptide spans 1 to 44 (MVHPHLSRTKRTFFSHSSQMISRHIRKTNSLAFVRALSASETAV). [4Fe-4S] cluster contacts are provided by cysteine 120, cysteine 125, cysteine 131, cysteine 150, cysteine 154, cysteine 157, and serine 365. The Radical SAM core domain maps to 135-354 (KKSEATATIM…KEVALEMGFL (220 aa)).

The protein belongs to the radical SAM superfamily. Lipoyl synthase family. [4Fe-4S] cluster is required as a cofactor.

The protein localises to the mitochondrion. The catalysed reaction is [[Fe-S] cluster scaffold protein carrying a second [4Fe-4S](2+) cluster] + N(6)-octanoyl-L-lysyl-[protein] + 2 oxidized [2Fe-2S]-[ferredoxin] + 2 S-adenosyl-L-methionine + 4 H(+) = [[Fe-S] cluster scaffold protein] + N(6)-[(R)-dihydrolipoyl]-L-lysyl-[protein] + 4 Fe(3+) + 2 hydrogen sulfide + 2 5'-deoxyadenosine + 2 L-methionine + 2 reduced [2Fe-2S]-[ferredoxin]. Its pathway is protein modification; protein lipoylation via endogenous pathway; protein N(6)-(lipoyl)lysine from octanoyl-[acyl-carrier-protein]: step 2/2. Catalyzes the radical-mediated insertion of two sulfur atoms into the C-6 and C-8 positions of the octanoyl moiety bound to the lipoyl domains of lipoate-dependent enzymes, thereby converting the octanoylated domains into lipoylated derivatives. This is Lipoyl synthase, mitochondrial from Clavispora lusitaniae (strain ATCC 42720) (Yeast).